Reading from the N-terminus, the 253-residue chain is 2,3-bisphosphoglycerate-dependent phosphoglycerate mutase (253 aa).

Substrate is bound by residues Arg-12–Asn-19, Thr-25–Gly-26, Arg-64, Glu-91–Tyr-94, Lys-102, Arg-118–Arg-119, and Gly-187–Asn-188. His-13 functions as the Tele-phosphohistidine intermediate in the catalytic mechanism. The Proton donor/acceptor role is filled by Glu-91.

It belongs to the phosphoglycerate mutase family. BPG-dependent PGAM subfamily.

The enzyme catalyses (2R)-2-phosphoglycerate = (2R)-3-phosphoglycerate. Its pathway is carbohydrate degradation; glycolysis; pyruvate from D-glyceraldehyde 3-phosphate: step 3/5. In terms of biological role, catalyzes the interconversion of 2-phosphoglycerate and 3-phosphoglycerate. The sequence is that of 2,3-bisphosphoglycerate-dependent phosphoglycerate mutase from Streptomyces griseus subsp. griseus (strain JCM 4626 / CBS 651.72 / NBRC 13350 / KCC S-0626 / ISP 5235).